The chain runs to 277 residues: 3-methyl-2-oxobutanoate hydroxymethyltransferase (277 aa).

The Mg(2+) site is built by Asp-49 and Asp-88. 3-methyl-2-oxobutanoate contacts are provided by residues 49 to 50 (DS), Asp-88, and Lys-118. Glu-120 is a binding site for Mg(2+). Catalysis depends on Glu-186, which acts as the Proton acceptor.

It belongs to the PanB family. In terms of assembly, homodecamer; pentamer of dimers. Mg(2+) is required as a cofactor.

It localises to the cytoplasm. The catalysed reaction is 3-methyl-2-oxobutanoate + (6R)-5,10-methylene-5,6,7,8-tetrahydrofolate + H2O = 2-dehydropantoate + (6S)-5,6,7,8-tetrahydrofolate. It functions in the pathway cofactor biosynthesis; (R)-pantothenate biosynthesis; (R)-pantoate from 3-methyl-2-oxobutanoate: step 1/2. Catalyzes the reversible reaction in which hydroxymethyl group from 5,10-methylenetetrahydrofolate is transferred onto alpha-ketoisovalerate to form ketopantoate. This Cereibacter sphaeroides (strain ATCC 17025 / ATH 2.4.3) (Rhodobacter sphaeroides) protein is 3-methyl-2-oxobutanoate hydroxymethyltransferase.